Reading from the N-terminus, the 92-residue chain is Small ribosomal subunit protein uS19 (92 aa).

This sequence belongs to the universal ribosomal protein uS19 family.

Its function is as follows. Protein S19 forms a complex with S13 that binds strongly to the 16S ribosomal RNA. The polypeptide is Small ribosomal subunit protein uS19 (Staphylococcus carnosus (strain TM300)).